Consider the following 496-residue polypeptide: Ribose import ATP-binding protein RbsA (496 aa).

2 consecutive ABC transporter domains span residues 3–239 (IVME…VGRE) and 246–493 (ERTP…TGGN). An ATP-binding site is contributed by 35 to 42 (GENGAGKS).

The protein belongs to the ABC transporter superfamily. Ribose importer (TC 3.A.1.2.1) family. In terms of assembly, the complex is composed of an ATP-binding protein (RbsA), two transmembrane proteins (RbsC) and a solute-binding protein (RbsB).

It is found in the cell membrane. It carries out the reaction D-ribose(out) + ATP + H2O = D-ribose(in) + ADP + phosphate + H(+). Functionally, part of the ABC transporter complex RbsABC involved in ribose import. Responsible for energy coupling to the transport system. This Oceanobacillus iheyensis (strain DSM 14371 / CIP 107618 / JCM 11309 / KCTC 3954 / HTE831) protein is Ribose import ATP-binding protein RbsA.